The primary structure comprises 351 residues: Probable protein phosphatase 2C 8 (351 aa).

The segment at 1–63 (MLEKESDLTA…REAEEDKPSF (63 aa)) is disordered. The span at 54–63 (REAEEDKPSF) shows a compositional bias: basic and acidic residues. One can recognise a PPM-type phosphatase domain in the interval 74 to 348 (EADVAEDKGA…DNCTAIVIVF (275 aa)). D114, G115, D295, and D339 together coordinate Mn(2+).

This sequence belongs to the PP2C family. Mg(2+) serves as cofactor. The cofactor is Mn(2+).

The enzyme catalyses O-phospho-L-seryl-[protein] + H2O = L-seryl-[protein] + phosphate. It catalyses the reaction O-phospho-L-threonyl-[protein] + H2O = L-threonyl-[protein] + phosphate. This is Probable protein phosphatase 2C 8 from Arabidopsis thaliana (Mouse-ear cress).